We begin with the raw amino-acid sequence, 137 residues long: SMR2 protein (137 aa).

The first 18 residues, 1-18 (MLVVLLTAALLALSSAQN), serve as a signal peptide directing secretion. The interval 14–113 (SSAQNTDEEV…LHHRENLRPQ (100 aa)) is disordered. Residues 75 to 85 (QQQQPLPVENQ) show a composition bias toward low complexity. Basic and acidic residues predominate over residues 99-110 (PPPETLHHRENL).

It is found in the secreted. In terms of biological role, unknown, male-specific function. This is SMR2 protein (Smr2) from Rattus norvegicus (Rat).